A 222-amino-acid chain; its full sequence is uncharacterized protein (222 aa).

The protein belongs to the PhoU family.

Its subcellular location is the cytoplasm. Functionally, not known; probably involved in phosphate transport and/or metabolism. This is an uncharacterized protein from Deinococcus radiodurans (strain ATCC 13939 / DSM 20539 / JCM 16871 / CCUG 27074 / LMG 4051 / NBRC 15346 / NCIMB 9279 / VKM B-1422 / R1).